Here is a 507-residue protein sequence, read N- to C-terminus: Protein FAM221B (507 aa).

Disordered stretches follow at residues 1–100, 154–310, and 486–507; these read MEAD…SAQS, LLSP…ESRP, and ETKR…HRPF. Polar residues predominate over residues 88-100; the sequence is NLPSTPSQSSAQS. A compositionally biased stretch (acidic residues) spans 167 to 177; that stretch reads SISDVQEEPLE. Residues 182 to 193 show a composition bias toward polar residues; the sequence is ADISETEYSISD. Acidic residues-rich tracts occupy residues 208–222 and 270–281; these read PESE…EEPL and SADEEEAEEEEL. Position 270 is a phosphoserine (serine 270).

Belongs to the FAM221 family.

This chain is Protein FAM221B (Fam221b), found in Rattus norvegicus (Rat).